Consider the following 284-residue polypeptide: Fructosamine kinase FrlD (284 aa).

Belongs to the carbohydrate kinase PfkB family.

Functionally, catalyzes the phosphorylation of a range of fructosamines to fructosamine 6-phosphates. The chain is Fructosamine kinase FrlD (frlD) from Bacillus subtilis (strain 168).